Here is a 356-residue protein sequence, read N- to C-terminus: UDP-N-acetylglucosamine--N-acetylmuramyl-(pentapeptide) pyrophosphoryl-undecaprenol N-acetylglucosamine transferase (356 aa).

UDP-N-acetyl-alpha-D-glucosamine contacts are provided by residues 12-14 (TGG), asparagine 124, arginine 163, serine 188, isoleucine 242, and glutamine 287.

The protein belongs to the glycosyltransferase 28 family. MurG subfamily.

Its subcellular location is the cell inner membrane. The enzyme catalyses di-trans,octa-cis-undecaprenyl diphospho-N-acetyl-alpha-D-muramoyl-L-alanyl-D-glutamyl-meso-2,6-diaminopimeloyl-D-alanyl-D-alanine + UDP-N-acetyl-alpha-D-glucosamine = di-trans,octa-cis-undecaprenyl diphospho-[N-acetyl-alpha-D-glucosaminyl-(1-&gt;4)]-N-acetyl-alpha-D-muramoyl-L-alanyl-D-glutamyl-meso-2,6-diaminopimeloyl-D-alanyl-D-alanine + UDP + H(+). Its pathway is cell wall biogenesis; peptidoglycan biosynthesis. Cell wall formation. Catalyzes the transfer of a GlcNAc subunit on undecaprenyl-pyrophosphoryl-MurNAc-pentapeptide (lipid intermediate I) to form undecaprenyl-pyrophosphoryl-MurNAc-(pentapeptide)GlcNAc (lipid intermediate II). The chain is UDP-N-acetylglucosamine--N-acetylmuramyl-(pentapeptide) pyrophosphoryl-undecaprenol N-acetylglucosamine transferase from Pseudomonas fluorescens (strain Pf0-1).